A 223-amino-acid chain; its full sequence is Gastrula zinc finger protein XlCGF52.1 (223 aa).

C2H2-type zinc fingers lie at residues 6–27 (FTCP…TEDH), 33–55 (FTCM…QRVH), 61–83 (YTCT…ISTH), 89–111 (FPCT…QRIH), 117–139 (FQCL…QRSH), 145–167 (YACS…ERIH), 173–195 (YECN…QKIH), and 201–223 (FTCT…QKIH).

The protein belongs to the krueppel C2H2-type zinc-finger protein family.

The protein resides in the nucleus. May be involved in transcriptional regulation. The polypeptide is Gastrula zinc finger protein XlCGF52.1 (Xenopus laevis (African clawed frog)).